We begin with the raw amino-acid sequence, 662 residues long: Transmembrane 9 superfamily member 2 (662 aa).

The N-terminal stretch at 1 to 28 (MSSRPPASPPAQGSRLLLLSLLLLGTVP) is a signal peptide. At 29–299 (GPRPGSAFYL…LESMPHTHIQ (271 aa)) the chain is on the lumenal side. A helical transmembrane segment spans residues 300–320 (WFSIMNSLVIVLFLSGMVAMI). The Cytoplasmic segment spans residues 321-373 (MLRTLHKDIARYNQMDSTEDAQEEFGWKLVHGDIFRPPRKGMLLSVFLGSGTQ). The helical transmembrane segment at 374 to 394 (ILIMTFVTLFFACLGFLSPAN) threads the bilayer. Topologically, residues 395–397 (RGA) are lumenal. A helical transmembrane segment spans residues 398–418 (LMTCAVVLWVLLGTPAGYVAA). The Cytoplasmic portion of the chain corresponds to 419-436 (RFYKSFGGEKWKTNVLLT). A helical membrane pass occupies residues 437–457 (SFLCPGIVFADFFIMNLILWG). The Lumenal portion of the chain corresponds to 458 to 465 (EGSSAAIP). A helical membrane pass occupies residues 466-486 (FGTLVAILALWFCISVPLTFI). Residues 487-521 (GAYFGFKKNAIEHPVRTNQIPRQIPEQSFYTKPLP) are Cytoplasmic-facing. A helical transmembrane segment spans residues 522-542 (GIIMGGILPFGCIFIQLFFIL). The Lumenal portion of the chain corresponds to 543 to 553 (NSIWSHQMYYM). Residues 554–574 (FGFLFLVFIILVITCSEATIL) form a helical membrane-spanning segment. Residues 575–590 (LCYFHLCAEDYHWQWR) are Cytoplasmic-facing. Residues 591-611 (SFLTSGFTAVYFLIYAIHYFF) form a helical membrane-spanning segment. Residues 612-630 (SKLQITGTASTILYFGYTM) lie on the Lumenal side of the membrane. The helical transmembrane segment at 631 to 651 (IMVLIFFLFTGTIGFFACFWF) threads the bilayer. At 652-662 (VTKIYSVVKVD) the chain is on the cytoplasmic side.

The protein belongs to the nonaspanin (TM9SF) (TC 9.A.2) family.

Its subcellular location is the endosome membrane. The protein resides in the golgi outpost. It is found in the cytoplasm. The protein localises to the cytoskeleton. It localises to the microtubule organizing center. Functionally, in the intracellular compartments, may function as a channel or small molecule transporter. The chain is Transmembrane 9 superfamily member 2 (Tm9sf2) from Mus musculus (Mouse).